A 555-amino-acid chain; its full sequence is Potassium-transporting ATPase potassium-binding subunit (555 aa).

10 consecutive transmembrane segments (helical) span residues isoleucine 2–isoleucine 22, glutamine 60–phenylalanine 80, isoleucine 130–phenylalanine 150, valine 173–threonine 193, methionine 246–tyrosine 266, isoleucine 278–glutamate 298, alanine 374–valine 394, leucine 412–leucine 432, leucine 483–leucine 503, and glycine 525–leucine 545.

It belongs to the KdpA family. The system is composed of three essential subunits: KdpA, KdpB and KdpC.

It is found in the cell membrane. Part of the high-affinity ATP-driven potassium transport (or Kdp) system, which catalyzes the hydrolysis of ATP coupled with the electrogenic transport of potassium into the cytoplasm. This subunit binds the extracellular potassium ions and delivers the ions to the membrane domain of KdpB through an intramembrane tunnel. The chain is Potassium-transporting ATPase potassium-binding subunit from Bacillus cereus (strain AH187).